Reading from the N-terminus, the 431-residue chain is UDP-N-acetylglucosamine 1-carboxyvinyltransferase (431 aa).

Residue 22 to 23 (KN) participates in phosphoenolpyruvate binding. UDP-N-acetyl-alpha-D-glucosamine is bound at residue R102. The active-site Proton donor is C126. At C126 the chain carries 2-(S-cysteinyl)pyruvic acid O-phosphothioketal. UDP-N-acetyl-alpha-D-glucosamine contacts are provided by residues 131–135 (RPVDL), D316, and I338.

The protein belongs to the EPSP synthase family. MurA subfamily.

It is found in the cytoplasm. The enzyme catalyses phosphoenolpyruvate + UDP-N-acetyl-alpha-D-glucosamine = UDP-N-acetyl-3-O-(1-carboxyvinyl)-alpha-D-glucosamine + phosphate. Its pathway is cell wall biogenesis; peptidoglycan biosynthesis. Its function is as follows. Cell wall formation. Adds enolpyruvyl to UDP-N-acetylglucosamine. The sequence is that of UDP-N-acetylglucosamine 1-carboxyvinyltransferase from Beijerinckia indica subsp. indica (strain ATCC 9039 / DSM 1715 / NCIMB 8712).